We begin with the raw amino-acid sequence, 465 residues long: Histidine--tRNA ligase (465 aa).

This sequence belongs to the class-II aminoacyl-tRNA synthetase family. In terms of assembly, homodimer.

Its subcellular location is the cytoplasm. It carries out the reaction tRNA(His) + L-histidine + ATP = L-histidyl-tRNA(His) + AMP + diphosphate + H(+). This chain is Histidine--tRNA ligase (hisS), found in Pelagibacter ubique (strain HTCC1062).